A 212-amino-acid chain; its full sequence is Large ribosomal subunit protein uL1 (212 aa).

The protein belongs to the universal ribosomal protein uL1 family. Part of the 50S ribosomal subunit.

Binds directly to 23S rRNA. Probably involved in E site tRNA release. In terms of biological role, protein L1 is also a translational repressor protein, it controls the translation of its operon by binding to its mRNA. The chain is Large ribosomal subunit protein uL1 from Methanosphaera stadtmanae (strain ATCC 43021 / DSM 3091 / JCM 11832 / MCB-3).